The primary structure comprises 347 residues: 4-hydroxyproline 2-epimerase (347 aa).

Gln85 provides a ligand contact to substrate. Residue Ser93 is the Proton acceptor of the active site. Substrate contacts are provided by residues 94–95 (GS) and Asp251. The active-site Proton donor is the Cys255. 256-257 (GT) lines the substrate pocket.

Belongs to the proline racemase family.

It catalyses the reaction trans-4-hydroxy-L-proline = cis-4-hydroxy-D-proline. Functionally, catalyzes the epimerization of trans-4-hydroxy-L-proline (t4LHyp) to cis-4-hydroxy-D-proline (c4DHyp). May be involved in a degradation pathway of t4LHyp. Can also catalyze the epimerization of trans-3-hydroxy-L-proline (t3LHyp) to cis-3-hydroxy-D-proline (c3DHyp) in vitro. Displays no proline racemase activity. The protein is 4-hydroxyproline 2-epimerase of Allorhizobium ampelinum (strain ATCC BAA-846 / DSM 112012 / S4) (Agrobacterium vitis (strain S4)).